The sequence spans 312 residues: HPr kinase/phosphorylase (312 aa).

Catalysis depends on residues His141 and Lys162. 156–163 contacts ATP; it reads GDSGIGKS. Position 163 (Ser163) interacts with Mg(2+). Asp180 functions as the Proton acceptor; for phosphorylation activity. Proton donor; for dephosphorylation activity in the catalytic mechanism. The tract at residues 204 to 213 is important for the catalytic mechanism of both phosphorylation and dephosphorylation; it reads LEIRGVGIID. Position 205 (Glu205) interacts with Mg(2+). Arg246 is a catalytic residue. Positions 267-272 are important for the catalytic mechanism of dephosphorylation; sequence PVRVGR.

This sequence belongs to the HPrK/P family. As to quaternary structure, homohexamer. Mg(2+) is required as a cofactor.

The catalysed reaction is [HPr protein]-L-serine + ATP = [HPr protein]-O-phospho-L-serine + ADP + H(+). It carries out the reaction [HPr protein]-O-phospho-L-serine + phosphate + H(+) = [HPr protein]-L-serine + diphosphate. Its function is as follows. Catalyzes the ATP- as well as the pyrophosphate-dependent phosphorylation of a specific serine residue in HPr, a phosphocarrier protein of the phosphoenolpyruvate-dependent sugar phosphotransferase system (PTS). HprK/P also catalyzes the pyrophosphate-producing, inorganic phosphate-dependent dephosphorylation (phosphorolysis) of seryl-phosphorylated HPr (P-Ser-HPr). The two antagonistic activities of HprK/P are regulated by several intracellular metabolites, which change their concentration in response to the absence or presence of rapidly metabolisable carbon sources (glucose, fructose, etc.) in the growth medium. Therefore, by controlling the phosphorylation state of HPr, HPrK/P is a sensor enzyme that plays a major role in the regulation of carbon metabolism and sugar transport: it mediates carbon catabolite repression (CCR), and regulates PTS-catalyzed carbohydrate uptake and inducer exclusion. The chain is HPr kinase/phosphorylase from Pediococcus pentosaceus (strain ATCC 25745 / CCUG 21536 / LMG 10740 / 183-1w).